The chain runs to 316 residues: Ribonuclease Z (316 aa).

Residues His-59, His-61, Asp-63, His-64, His-135, Asp-203, and His-261 each coordinate Zn(2+). Catalysis depends on Asp-63, which acts as the Proton acceptor.

Belongs to the RNase Z family. Homodimer. It depends on Zn(2+) as a cofactor.

It carries out the reaction Endonucleolytic cleavage of RNA, removing extra 3' nucleotides from tRNA precursor, generating 3' termini of tRNAs. A 3'-hydroxy group is left at the tRNA terminus and a 5'-phosphoryl group is left at the trailer molecule.. Zinc phosphodiesterase, which displays some tRNA 3'-processing endonuclease activity. Probably involved in tRNA maturation, by removing a 3'-trailer from precursor tRNA. This Nanoarchaeum equitans (strain Kin4-M) protein is Ribonuclease Z.